A 381-amino-acid chain; its full sequence is ELMO domain-containing protein 3 (381 aa).

Residues 1–17 (MNENFHSFHEKELRDGQ) are compositionally biased toward basic and acidic residues. Residues 1-31 (MNENFHSFHEKELRDGQVESVSAGSSPPCDK) form a disordered region. Residues 170-324 (MHGRVLQTIY…DLEMSAKKSP (155 aa)) form the ELMO domain.

It is found in the cell projection. It localises to the stereocilium. Its subcellular location is the kinocilium. The protein localises to the cytoplasm. The protein resides in the cytoskeleton. Acts as a GTPase-activating protein (GAP) for ARL2 with low specific activity. The polypeptide is ELMO domain-containing protein 3 (ELMOD3) (Bos taurus (Bovine)).